The following is a 177-amino-acid chain: Antigen TyF1 (177 aa).

Belongs to the Dps family. Homodecamer.

The protein is Antigen TyF1 of Treponema pallidum subsp. pertenue (Yaws treponeme).